A 590-amino-acid chain; its full sequence is Melanophilin (590 aa).

In terms of domain architecture, RabBD spans 4-124 (RLDLSTLTDE…IGSLEWYYQH (121 aa)). The segment at 64-107 (CARCLQPYRLLLNSRRQCLECSLFVCKSCSHAHPEEQGWLCDPC) adopts an FYVE-type zinc-finger fold. Disordered regions lie at residues 147–182 (GGGG…PLNS), 215–276 (SVPE…AELD), 311–335 (DTSD…ARTV), 361–472 (VLPP…SEIS), and 485–590 (GLTV…AQQP). The span at 154–172 (SLEEGNGDSEQTDEDGDLD) shows a compositional bias: acidic residues. Positions 215–238 (SVPESAHSLQSLSGEPYSEDTTSL) are enriched in polar residues. Positions 339 to 485 (QILELNKRMS…SRIAALRAAG (147 aa)) form a coiled coil. Low complexity predominate over residues 391-401 (LTSNISGSSTS). Positions 424 to 433 (GHMETQERNP) are enriched in basic and acidic residues.

Binds RAB27A that has been activated by GTP-binding via its N-terminus. Binds MYO5A via its C-terminal coiled coil domain. As to expression, highly expressed in embryos at day 7; not detectable at day 11. Highly expressed in adult stomach; detected at lower levels in kidney, lung, skin and small intestine. Detected in melanocytes.

It is found in the melanosome. In terms of biological role, rab effector protein involved in melanosome transport. Serves as link between melanosome-bound RAB27A and the motor protein MYO5A. The polypeptide is Melanophilin (Mlph) (Mus musculus (Mouse)).